Consider the following 412-residue polypeptide: Serine hydroxymethyltransferase 1 (412 aa).

(6S)-5,6,7,8-tetrahydrofolate contacts are provided by residues Leu-116 and 120–122 (GHL). Position 225 is an N6-(pyridoxal phosphate)lysine (Lys-225).

The protein belongs to the SHMT family. Homodimer. The cofactor is pyridoxal 5'-phosphate.

The protein resides in the cytoplasm. It carries out the reaction (6R)-5,10-methylene-5,6,7,8-tetrahydrofolate + glycine + H2O = (6S)-5,6,7,8-tetrahydrofolate + L-serine. It functions in the pathway one-carbon metabolism; tetrahydrofolate interconversion. Its pathway is amino-acid biosynthesis; glycine biosynthesis; glycine from L-serine: step 1/1. Functionally, catalyzes the reversible interconversion of serine and glycine with tetrahydrofolate (THF) serving as the one-carbon carrier. This reaction serves as the major source of one-carbon groups required for the biosynthesis of purines, thymidylate, methionine, and other important biomolecules. Also exhibits THF-independent aldolase activity toward beta-hydroxyamino acids, producing glycine and aldehydes, via a retro-aldol mechanism. The sequence is that of Serine hydroxymethyltransferase 1 from Pseudomonas fluorescens (strain Pf0-1).